The primary structure comprises 88 residues: Putative membrane protein insertion efficiency factor (88 aa).

The protein belongs to the UPF0161 family.

It localises to the cell inner membrane. In terms of biological role, could be involved in insertion of integral membrane proteins into the membrane. The polypeptide is Putative membrane protein insertion efficiency factor (Prochlorococcus marinus (strain MIT 9313)).